Consider the following 490-residue polypeptide: Cobyric acid synthase (490 aa).

Residues 253-440 (KLRVAAPAAP…LHGVFDEPAA (188 aa)) enclose the GATase cobBQ-type domain. Cysteine 334 acts as the Nucleophile in catalysis. Histidine 432 is an active-site residue.

The protein belongs to the CobB/CobQ family. CobQ subfamily.

It functions in the pathway cofactor biosynthesis; adenosylcobalamin biosynthesis. In terms of biological role, catalyzes amidations at positions B, D, E, and G on adenosylcobyrinic A,C-diamide. NH(2) groups are provided by glutamine, and one molecule of ATP is hydrogenolyzed for each amidation. This is Cobyric acid synthase from Chromobacterium violaceum (strain ATCC 12472 / DSM 30191 / JCM 1249 / CCUG 213 / NBRC 12614 / NCIMB 9131 / NCTC 9757 / MK).